A 193-amino-acid chain; its full sequence is Segregation and condensation protein B (193 aa).

This sequence belongs to the ScpB family. As to quaternary structure, homodimer. Homodimerization may be required to stabilize the binding of ScpA to the Smc head domains. Component of a cohesin-like complex composed of ScpA, ScpB and the Smc homodimer, in which ScpA and ScpB bind to the head domain of Smc. The presence of the three proteins is required for the association of the complex with DNA.

It localises to the cytoplasm. In terms of biological role, participates in chromosomal partition during cell division. May act via the formation of a condensin-like complex containing Smc and ScpA that pull DNA away from mid-cell into both cell halves. In Clostridium botulinum (strain 657 / Type Ba4), this protein is Segregation and condensation protein B.